The sequence spans 192 residues: Erythropoietin (192 aa).

Residues 1–26 (MGVPDCLALPLLVTFLLLSLGLPVLG) form the signal peptide. Cysteines 33 and 187 form a disulfide. N-linked (GlcNAc...) asparagine glycans are attached at residues asparagine 50, asparagine 64, and asparagine 109.

Belongs to the EPO/TPO family.

Its subcellular location is the secreted. Its function is as follows. Hormone involved in the regulation of erythrocyte proliferation and differentiation and the maintenance of a physiological level of circulating erythrocyte mass. Binds to EPOR leading to EPOR dimerization and JAK2 activation thereby activating specific downstream effectors, including STAT1 and STAT3. The sequence is that of Erythropoietin (EPO) from Nannospalax galili (Northern Israeli blind subterranean mole rat).